Reading from the N-terminus, the 190-residue chain is Large ribosomal subunit protein eL19 (190 aa).

Disordered regions lie at residues 56-85 and 166-190; these read TVHS…KGTK and NRAA…EAAN. The segment covering 72 to 83 has biased composition (basic residues); it reads AGRHMGYGKRKG. Positions 166–184 are enriched in basic and acidic residues; the sequence is NRAARERRQQRLAEKKEAL.

The protein belongs to the eukaryotic ribosomal protein eL19 family. In terms of assembly, component of the large ribosomal subunit. Mature ribosomes consist of a small (40S) and a large (60S) subunit. The 40S subunit contains about 32 different proteins and 1 molecule of RNA (18S). The 60S subunit contains 45 different proteins and 3 molecules of RNA (25S, 5.8S and 5S).

The protein localises to the cytoplasm. Component of the ribosome, a large ribonucleoprotein complex responsible for the synthesis of proteins in the cell. The small ribosomal subunit (SSU) binds messenger RNAs (mRNAs) and translates the encoded message by selecting cognate aminoacyl-transfer RNA (tRNA) molecules. The large subunit (LSU) contains the ribosomal catalytic site termed the peptidyl transferase center (PTC), which catalyzes the formation of peptide bonds, thereby polymerizing the amino acids delivered by tRNAs into a polypeptide chain. The nascent polypeptides leave the ribosome through a tunnel in the LSU and interact with protein factors that function in enzymatic processing, targeting, and the membrane insertion of nascent chains at the exit of the ribosomal tunnel. RPL19A may play a role in the last stages of translation initiation, in particular subunit joining and shedding/releasing factors. This is Large ribosomal subunit protein eL19 from Candida albicans (strain SC5314 / ATCC MYA-2876) (Yeast).